A 424-amino-acid chain; its full sequence is MHRCMPLVAASMAALMLAGCGGGDGDTTLSTAAATDTTTLKTAATTSISPLWLTIAKDSAAFTVSGTRTVRYGAGSAWVAKSMSGTGQCTAAFFGKDPAAGVAKVCQVAQGTGTLLWRGVSLAGAEFGEGSLPGTYGSNYIYPSADSATYYKNKGMNLVRLPFRWERLQPTLNQALDANELSRLTGFVNAVTAAGQTVLLDPHNYARYYGNVIGSSAVPNSAYADFWRRVATQFKGNARVIFGLMNEPNSMPTEQWLSGANAALAAIRSANASNVVFVPGNAWTGAHSWNQNWYGTPNGTVMKGINDPGRNLVFEVHQYLDGDSSGQSASCVSATIGAERLQDFTNWLRSNGYRGFLGEFGAASNDTCNQAVANMLTFVKNNADVWTGWAWWAGGPWWGGYMYSIEPSNGVDKPQMSVLAPYLK.

An N-terminal signal peptide occupies residues 1 to 19 (MHRCMPLVAASMAALMLAG). The N-palmitoyl cysteine moiety is linked to residue Cys-20. A lipid anchor (S-diacylglycerol cysteine) is attached at Cys-20. The propeptide occupies 20 to 43 (CGGGDGDTTLSTAAATDTTTLKTA). The active-site Proton donor is the Glu-247. The active-site Nucleophile is Glu-359.

Belongs to the glycosyl hydrolase 5 (cellulase A) family.

It is found in the cell membrane. It catalyses the reaction Endohydrolysis of (1-&gt;4)-beta-D-glucosidic linkages in cellulose, lichenin and cereal beta-D-glucans.. The polypeptide is Endoglucanase (egl) (Ralstonia nicotianae (strain ATCC BAA-1114 / GMI1000) (Ralstonia solanacearum)).